The chain runs to 666 residues: ATP-dependent zinc metalloprotease FtsH (666 aa).

The disordered stretch occupies residues 1-23 (MSREVTSGLPQDKPTGSAPPPPP). The Cytoplasmic segment spans residues 1–27 (MSREVTSGLPQDKPTGSAPPPPPPWRR). The chain crosses the membrane as a helical span at residues 28–48 (WLLPIGLLVSLVLLFTFPMRP). Over 49 to 125 (SSGKTLTYSE…RPPGPSLASQ (77 aa)) the chain is Extracellular. Residues 126-146 (VLAGVLSFLPFLLLLGLFAYS) traverse the membrane as a helical segment. Topologically, residues 147-666 (GRRAGAGFLA…RTAASSDDLL (520 aa)) are cytoplasmic. Residue 219 to 226 (GPPGTGKT) participates in ATP binding. His-442 serves as a coordination point for Zn(2+). Glu-443 is an active-site residue. Zn(2+) contacts are provided by His-446 and Asp-518. A disordered region spans residues 626–666 (PEEHREAAARHVRRPGIAAATGASMAGGSEPRTAASSDDLL). Positions 641 to 653 (GIAAATGASMAGG) are enriched in low complexity.

The protein in the central section; belongs to the AAA ATPase family. It in the C-terminal section; belongs to the peptidase M41 family. In terms of assembly, homohexamer. It depends on Zn(2+) as a cofactor.

The protein resides in the cell membrane. Acts as a processive, ATP-dependent zinc metallopeptidase for both cytoplasmic and membrane proteins. Plays a role in the quality control of integral membrane proteins. The sequence is that of ATP-dependent zinc metalloprotease FtsH from Acidothermus cellulolyticus (strain ATCC 43068 / DSM 8971 / 11B).